The primary structure comprises 170 residues: uncharacterized protein (170 aa).

Transmembrane regions (helical) follow at residues 6–26 (PFYF…ILLI), 31–51 (LLFI…LIYI), and 91–111 (IYFS…IVAF).

This sequence to M.jannaschii MJ1249.1, MJ0210.1 and MJ0785.1.

It is found in the cell membrane. This is an uncharacterized protein from Methanocaldococcus jannaschii (strain ATCC 43067 / DSM 2661 / JAL-1 / JCM 10045 / NBRC 100440) (Methanococcus jannaschii).